The chain runs to 340 residues: Phosphoribosylformylglycinamidine cyclo-ligase (340 aa).

It belongs to the AIR synthase family.

The protein localises to the cytoplasm. The enzyme catalyses 2-formamido-N(1)-(5-O-phospho-beta-D-ribosyl)acetamidine + ATP = 5-amino-1-(5-phospho-beta-D-ribosyl)imidazole + ADP + phosphate + H(+). It participates in purine metabolism; IMP biosynthesis via de novo pathway; 5-amino-1-(5-phospho-D-ribosyl)imidazole from N(2)-formyl-N(1)-(5-phospho-D-ribosyl)glycinamide: step 2/2. The protein is Phosphoribosylformylglycinamidine cyclo-ligase of Crocosphaera subtropica (strain ATCC 51142 / BH68) (Cyanothece sp. (strain ATCC 51142)).